We begin with the raw amino-acid sequence, 447 residues long: Probable rhamnogalacturonase C (447 aa).

The N-terminal stretch at 1–19 is a signal peptide; it reads MQVKLFYTLALWAPILVSA. Asn37 and Asn65 each carry an N-linked (GlcNAc...) asparagine glycan. A disulfide bridge connects residues Cys40 and Cys66. The active-site Proton donor is Asp217. Cysteines 219 and 236 form a disulfide. 2 N-linked (GlcNAc...) asparagine glycosylation sites follow: Asn237 and Asn252. His291 is a catalytic residue. N-linked (GlcNAc...) asparagine glycosylation is present at Asn316. Intrachain disulfides connect Cys338–Cys344 and Cys366–Cys375.

It belongs to the glycosyl hydrolase 28 family.

It is found in the secreted. In terms of biological role, pectinolytic enzymes consist of four classes of enzymes: pectine lyase, polygalacturonase, pectin methylesterase and rhamnogalacturonase. Hydrolyzes alpha-D-galacturonopyranosyl-(1,2)-alpha-L-rhamnopyranosyl linkages in the backbone of the hairy regions of pectins. The sequence is that of Probable rhamnogalacturonase C (rhgC) from Aspergillus flavus (strain ATCC 200026 / FGSC A1120 / IAM 13836 / NRRL 3357 / JCM 12722 / SRRC 167).